The sequence spans 154 residues: MGETEGKVIAQNKKARHDYFIEETFEAGMVLQGTEIKSIRAGRANLKDSFARVSNGEVYLHNCHISEYEQGNRYNHEPTRARKLLLHKKQIDTLIGQTQQKGYTIVPLKIYIKNGFAKCLIGLGKGKKTFDKRETLRRRDAKREVERALKEKNR.

The segment at 134–154 (ETLRRRDAKREVERALKEKNR) is disordered.

Belongs to the SmpB family.

Its subcellular location is the cytoplasm. In terms of biological role, required for rescue of stalled ribosomes mediated by trans-translation. Binds to transfer-messenger RNA (tmRNA), required for stable association of tmRNA with ribosomes. tmRNA and SmpB together mimic tRNA shape, replacing the anticodon stem-loop with SmpB. tmRNA is encoded by the ssrA gene; the 2 termini fold to resemble tRNA(Ala) and it encodes a 'tag peptide', a short internal open reading frame. During trans-translation Ala-aminoacylated tmRNA acts like a tRNA, entering the A-site of stalled ribosomes, displacing the stalled mRNA. The ribosome then switches to translate the ORF on the tmRNA; the nascent peptide is terminated with the 'tag peptide' encoded by the tmRNA and targeted for degradation. The ribosome is freed to recommence translation, which seems to be the essential function of trans-translation. The sequence is that of SsrA-binding protein from Halalkalibacterium halodurans (strain ATCC BAA-125 / DSM 18197 / FERM 7344 / JCM 9153 / C-125) (Bacillus halodurans).